We begin with the raw amino-acid sequence, 499 residues long: Neuropeptide CCHamide-1 receptor (499 aa).

Residues 1–85 are Extracellular-facing; it reads MIANLVSMET…GRRPETYIVP (85 aa). N33 and N61 each carry an N-linked (GlcNAc...) asparagine glycan. A helical transmembrane segment spans residues 86–106; the sequence is ILFALIFVVGVLGNGTLIVVF. Residues 107 to 117 are Cytoplasmic-facing; that stretch reads LSVRQMRNVPN. A helical transmembrane segment spans residues 118 to 138; it reads TYILSLALADLLVIITTVPLA. Residues 139-162 are Extracellular-facing; sequence STVYTVEYWPYGSFLCSLSEFMKD. C154 and C240 are oxidised to a cystine. Residues 163–183 form a helical membrane-spanning segment; sequence VSIGVSVFTLTALSGDRYFAI. Residues 184–203 lie on the Cytoplasmic side of the membrane; it reads VDPLRKFHAHGGGRRATRMT. A helical transmembrane segment spans residues 204–224; the sequence is LATAVSIWLLAILCGLPALIG. The Extracellular portion of the chain corresponds to 225 to 259; sequence SNLKHLGINEKSIVICYPYPEEWGINYAKSMVLLH. The chain crosses the membrane as a helical span at residues 260–280; sequence FLVYYAIPLVVIAVFYVLIAL. Topologically, residues 281–309 are cytoplasmic; the sequence is HLMYSASVPGEIQGAVRQVRARRKVAVTV. The chain crosses the membrane as a helical span at residues 310 to 330; it reads LAFVVIFGICFLPYHVFFLWF. The Extracellular portion of the chain corresponds to 331–348; sequence YFWPTAQDDYNAFWHVLR. A helical transmembrane segment spans residues 349–369; sequence IVAYCMSFANSCANPVALYFV. Residues 370–499 are Cytoplasmic-facing; it reads SGAFRKHFNR…PAKFQESLLN (130 aa).

The protein belongs to the G-protein coupled receptor 1 family. In terms of tissue distribution, low levels in larval brain and gut with higher levels in adult brain and gut. In the brain expression is widely distributed, including strong expression in the mushroom bodies. Expressed weakly in s-LNv (small ventral lateral neurons) and strongly in l-LNv (large ventral lateral neurons), but not in other clock neurons.

The protein resides in the cell membrane. Functionally, receptor for the neuropeptide CCHamide-1. Plays a role in the modulation of starvation-induced olfactory behavior where starved flies show increased responsiveness to food odorants, repellants and pheromones. Contributes to regulation of sleep latency (the time required to fall asleep), amount of sleep and depth of sleep (arousability). Involved in modulation of PDP1 and PDF levels in s-LNv (small ventral lateral neurons) clock neurons in response to CCHa1 released by DN1a (anterior dorsal neurons 1) clock neurons, to regulate morning activity. In a subset of dopaminergic cells in the protocerebral anterior medial (PAM) cluster involved in suppressing arousability in response to CCHa1 secreted by gut enteroendocrine cells. The protein is Neuropeptide CCHamide-1 receptor of Drosophila melanogaster (Fruit fly).